A 472-amino-acid chain; its full sequence is Acetyl-CoA decarbonylase/synthase complex subunit beta 2 (472 aa).

[Ni-Fe-S] cluster-binding residues include cysteine 189, cysteine 192, cysteine 278, and cysteine 280.

Belongs to the CdhC family. Monomer. The ACDS complex is made up of alpha, epsilon, beta, gamma and delta chains with a probable stoichiometry of (alpha(2)epsilon(2))(4)-beta(8)-(gamma(1)delta(1))(8) (Potential). Requires [Ni-Fe-S] cluster as cofactor.

The enzyme catalyses Co(I)-[corrinoid Fe-S protein] + acetyl-CoA + H(+) = methyl-Co(III)-[corrinoid Fe-S protein] + CO + CoA. It functions in the pathway one-carbon metabolism; methanogenesis from acetate. Functionally, part of a complex that catalyzes the reversible cleavage of acetyl-CoA, allowing growth on acetate as sole source of carbon and energy. The alpha-epsilon complex generates CO from CO(2), while the beta subunit (this protein) combines the CO with CoA and a methyl group to form acetyl-CoA. The methyl group, which is incorporated into acetyl-CoA, is transferred to the beta subunit by a corrinoid iron-sulfur protein (the gamma-delta complex). This chain is Acetyl-CoA decarbonylase/synthase complex subunit beta 2 (cdhC2), found in Methanosarcina thermophila.